Reading from the N-terminus, the 280-residue chain is Dermonecrotic toxin LsSicTox-alphaIA1 (280 aa).

Residue H12 is part of the active site. Residues E32 and D34 each contribute to the Mg(2+) site. H48 serves as the catalytic Nucleophile. Disulfide bonds link C52-C58 and C54-C197. D92 lines the Mg(2+) pocket.

It belongs to the arthropod phospholipase D family. Class II subfamily. It depends on Mg(2+) as a cofactor. As to expression, expressed by the venom gland.

It is found in the secreted. The enzyme catalyses an N-(acyl)-sphingosylphosphocholine = an N-(acyl)-sphingosyl-1,3-cyclic phosphate + choline. It carries out the reaction an N-(acyl)-sphingosylphosphoethanolamine = an N-(acyl)-sphingosyl-1,3-cyclic phosphate + ethanolamine. It catalyses the reaction a 1-acyl-sn-glycero-3-phosphocholine = a 1-acyl-sn-glycero-2,3-cyclic phosphate + choline. The catalysed reaction is a 1-acyl-sn-glycero-3-phosphoethanolamine = a 1-acyl-sn-glycero-2,3-cyclic phosphate + ethanolamine. Functionally, dermonecrotic toxins cleave the phosphodiester linkage between the phosphate and headgroup of certain phospholipids (sphingolipid and lysolipid substrates), forming an alcohol (often choline) and a cyclic phosphate. This toxin acts on sphingomyelin (SM). It may also act on ceramide phosphoethanolamine (CPE), lysophosphatidylcholine (LPC) and lysophosphatidylethanolamine (LPE), but not on lysophosphatidylserine (LPS), and lysophosphatidylglycerol (LPG). It acts by transphosphatidylation, releasing exclusively cyclic phosphate products as second products. Induces dermonecrosis, hemolysis, increased vascular permeability, edema, inflammatory response, and platelet aggregation. The protein is Dermonecrotic toxin LsSicTox-alphaIA1 of Loxosceles similis (Brazilian brown spider).